A 310-amino-acid polypeptide reads, in one-letter code: Fe-S cluster assembly protein dre2 (310 aa).

Residues 1-130 (MSGRTLLLSP…KPDIEDMRAV (130 aa)) form an N-terminal SAM-like domain region. The tract at residues 131–203 (PLRLGRKKHD…EDLLDGSELA (73 aa)) is linker. Residues Cys-212, Cys-223, Cys-226, and Cys-228 each contribute to the [2Fe-2S] cluster site. Positions 212–228 (CRPKAGRRRRACKDCTC) are fe-S binding site A. [4Fe-4S] cluster is bound by residues Cys-273, Cys-276, Cys-284, and Cys-287. Short sequence motifs (cx2C motif) lie at residues 273 to 276 (CGNC) and 284 to 287 (CEGC). Residues 273–287 (CGNCSLGDAFRCEGC) form a fe-S binding site B region.

It belongs to the anamorsin family. In terms of assembly, monomer. Interacts with tah18. Interacts with mia40. Requires [2Fe-2S] cluster as cofactor. [4Fe-4S] cluster is required as a cofactor.

It is found in the cytoplasm. It localises to the mitochondrion intermembrane space. Its function is as follows. Component of the cytosolic iron-sulfur (Fe-S) protein assembly (CIA) machinery required for the maturation of extramitochondrial Fe-S proteins. Part of an electron transfer chain functioning in an early step of cytosolic Fe-S biogenesis, facilitating the de novo assembly of a [4Fe-4S] cluster on the scaffold complex cfd1-nbp35. Electrons are transferred to dre2 from NADPH via the FAD- and FMN-containing protein tah18. Tah18-dre2 are also required for the assembly of the diferric tyrosyl radical cofactor of ribonucleotide reductase (RNR), probably by providing electrons for reduction during radical cofactor maturation in the catalytic small subunit rnr2. This Aspergillus clavatus (strain ATCC 1007 / CBS 513.65 / DSM 816 / NCTC 3887 / NRRL 1 / QM 1276 / 107) protein is Fe-S cluster assembly protein dre2.